The primary structure comprises 66 residues: DNA gyrase inhibitor YacG (66 aa).

Residues Cys-9, Cys-12, Cys-28, and Cys-32 each coordinate Zn(2+).

The protein belongs to the DNA gyrase inhibitor YacG family. In terms of assembly, interacts with GyrB. Zn(2+) serves as cofactor.

In terms of biological role, inhibits all the catalytic activities of DNA gyrase by preventing its interaction with DNA. Acts by binding directly to the C-terminal domain of GyrB, which probably disrupts DNA binding by the gyrase. The protein is DNA gyrase inhibitor YacG of Pseudomonas aeruginosa (strain LESB58).